A 352-amino-acid polypeptide reads, in one-letter code: Isoflavone-7-O-methyltransferase 9 (352 aa).

A substrate-binding site is contributed by 118-127 (VLDPTLSGSY). S-adenosyl-L-methionine-binding residues include Gly-196, Asp-219, Asp-239, Met-240, and Lys-253. Catalysis depends on His-257, which acts as the Proton acceptor.

It belongs to the class I-like SAM-binding methyltransferase superfamily. Cation-independent O-methyltransferase family. COMT subfamily. Homodimer.

The catalysed reaction is a 7-hydroxyisoflavone + S-adenosyl-L-methionine = a 7-methoxyisoflavone + S-adenosyl-L-homocysteine + H(+). Its pathway is phytoalexin biosynthesis; medicarpin biosynthesis. Functionally, transfers a methyl group to 7-hydroxyls of the isoflavones daidzein, genistein and 6,7,4'-trihydroxyisoflavone. Can also methylate (+)6a-hydroxymaackiain with lower efficiency. The sequence is that of Isoflavone-7-O-methyltransferase 9 from Medicago sativa (Alfalfa).